The following is a 920-amino-acid chain: Nonribosomal peptide synthetase atrA (920 aa).

The tract at residues A13–I428 is adenylation (A) domain. One can recognise a Carrier domain in the interval P558–Q637. The residue at position 595 (S595) is an O-(pantetheine 4'-phosphoryl)serine. The tract at residues P656 to F905 is thioesterase (TE) domain.

It belongs to the NRP synthetase family.

The catalysed reaction is 2 3-(4-hydroxyphenyl)pyruvate + 2 ATP = atromentin + 2 AMP + 2 diphosphate + H(+). Nonribosomal peptide synthetase that mediates the biosynthesis of atromentin. AtrA first activates 4-hydroxyphenylpyruvate (HPPA) through its A domain to AMP-HPPA. The HPPA unit is then loaded to the T domain and eventually transferred to the TE domain. Another HPPA unit is then loaded onto the T domain. The TE domain then catalyzes the condensation of the two HPPA units and the release of atromentin via cyclization. This is Nonribosomal peptide synthetase atrA from Aspergillus terreus (strain NIH 2624 / FGSC A1156).